The following is a 122-amino-acid chain: Large ribosomal subunit protein uL14c (122 aa).

The protein belongs to the universal ribosomal protein uL14 family. In terms of assembly, part of the 50S ribosomal subunit.

The protein localises to the plastid. Its subcellular location is the chloroplast. Its function is as follows. Binds to 23S rRNA. In Phaseolus vulgaris (Kidney bean), this protein is Large ribosomal subunit protein uL14c.